Reading from the N-terminus, the 593-residue chain is Efflux pump FUB11 (593 aa).

The tract at residues 1-45 (MAIDPQPSSPSLSSETIANDTIGNDNNVNEPSVEPKTQEHQHTVP) is disordered. Polar residues predominate over residues 9–30 (SPSLSSETIANDTIGNDNNVNE). An N-linked (GlcNAc...) asparagine glycan is attached at N19. 12 consecutive transmembrane segments (helical) span residues 98–118 (WAFV…SSAY), 135–155 (VATL…LVWA), 167–187 (FFFT…AGSI), 195–215 (FLTG…IADM), 227–247 (MFSG…GFLG), 254–274 (WLHG…TVFI), 337–357 (IYIS…PIVF), 367–387 (IGGL…ISFA), 410–430 (LPPA…FAWT), 438–458 (IVPI…FMAL), 468–488 (IFAA…GAAF), and 503–523 (WASS…FLFY). Positions 570–593 (THNSHASAAHSHGHRRSLSYTRSA) are disordered.

Belongs to the major facilitator superfamily. DHA1 family. Polyamines/proton antiporter (TC 2.A.1.2.16) subfamily.

It is found in the cell membrane. Functionally, efflux pump involved in export of fusaric acid, a mycotoxin with low to moderate toxicity to animals and humans, but with high phytotoxic properties. Constitutes a self-protecting mechanism of the fungus against critical levels of FSA within the cell. The sequence is that of Efflux pump FUB11 from Gibberella moniliformis (strain M3125 / FGSC 7600) (Maize ear and stalk rot fungus).